Consider the following 329-residue polypeptide: Fructose-1,6-bisphosphatase class 1 (329 aa).

Glu84, Asp103, Leu105, and Asp106 together coordinate Mg(2+). Residues 106-109 (DGSS), Asn196, and Lys262 each bind substrate. Glu268 is a Mg(2+) binding site.

It belongs to the FBPase class 1 family. In terms of assembly, homotetramer. Requires Mg(2+) as cofactor.

It is found in the cytoplasm. The enzyme catalyses beta-D-fructose 1,6-bisphosphate + H2O = beta-D-fructose 6-phosphate + phosphate. Its pathway is carbohydrate biosynthesis; gluconeogenesis. The protein is Fructose-1,6-bisphosphatase class 1 of Shewanella woodyi (strain ATCC 51908 / MS32).